We begin with the raw amino-acid sequence, 595 residues long: Elongation factor 4 2 (595 aa).

One can recognise a tr-type G domain in the interval 4–187; that stretch reads SHIRNFAIIA…AIKQRLPAPQ (184 aa). GTP contacts are provided by residues 16 to 21 and 133 to 136; these read DHGKST and NKVD.

It belongs to the TRAFAC class translation factor GTPase superfamily. Classic translation factor GTPase family. LepA subfamily.

It is found in the cell membrane. It catalyses the reaction GTP + H2O = GDP + phosphate + H(+). In terms of biological role, required for accurate and efficient protein synthesis under certain stress conditions. May act as a fidelity factor of the translation reaction, by catalyzing a one-codon backward translocation of tRNAs on improperly translocated ribosomes. Back-translocation proceeds from a post-translocation (POST) complex to a pre-translocation (PRE) complex, thus giving elongation factor G a second chance to translocate the tRNAs correctly. Binds to ribosomes in a GTP-dependent manner. The polypeptide is Elongation factor 4 2 (Lactiplantibacillus plantarum (strain ATCC BAA-793 / NCIMB 8826 / WCFS1) (Lactobacillus plantarum)).